The chain runs to 234 residues: HTH-type transcriptional regulator ArcR (234 aa).

40 to 129 contacts a nucleoside 3',5'-cyclic phosphate; the sequence is VRHYTKGQVI…MAFLCKANDD (90 aa). In terms of domain architecture, HTH crp-type spans 155–228; sequence KFAKDRIIKL…HKNWLVSKHL (74 aa). A DNA-binding region (H-T-H motif) is located at residues 188-207; that stretch reads IQLMSDMAGISRETAGHIIH.

Its subcellular location is the cytoplasm. Functionally, positively regulates the expression of the arcABDCR operon under anaerobic conditions, thus playing an essential role in arginine catabolism. May also control the expression of genes encoding proteins which are involved in anaerobic metabolism. Can bind cyclic AMP. The chain is HTH-type transcriptional regulator ArcR (arcR) from Staphylococcus aureus (strain Mu50 / ATCC 700699).